Here is a 216-residue protein sequence, read N- to C-terminus: Uracil phosphoribosyltransferase (216 aa).

Residues Arg85, Arg110, and 135-143 (DPMVATGYS) contribute to the 5-phospho-alpha-D-ribose 1-diphosphate site. Residues Ile200 and 205–207 (GDA) contribute to the uracil site. Asp206 serves as a coordination point for 5-phospho-alpha-D-ribose 1-diphosphate.

This sequence belongs to the UPRTase family. Mg(2+) is required as a cofactor.

It carries out the reaction UMP + diphosphate = 5-phospho-alpha-D-ribose 1-diphosphate + uracil. It participates in pyrimidine metabolism; UMP biosynthesis via salvage pathway; UMP from uracil: step 1/1. With respect to regulation, allosterically activated by GTP. Its function is as follows. Catalyzes the conversion of uracil and 5-phospho-alpha-D-ribose 1-diphosphate (PRPP) to UMP and diphosphate. The sequence is that of Uracil phosphoribosyltransferase from Paraburkholderia xenovorans (strain LB400).